Reading from the N-terminus, the 312-residue chain is Apolipoprotein E (312 aa).

A signal peptide spans 1 to 18 (MKALWAVLLVTLLAGCLA). 8 repeat units span residues 72-93 (VLME…EQLG), 94-115 (PVAE…ARLG), 116-137 (ADME…TMLG), 138-159 (QSTE…KRLM), 160-181 (RDAE…EGAE), 182-203 (RGVS…QRTA), 204-225 (NLGA…DRIR), and 226-247 (GRLE…EHME). The 8 X 22 AA approximate tandem repeats stretch occupies residues 72–247 (VLMEDTMTEV…RLEEVREHME (176 aa)). Methionine 135 is subject to Methionine sulfoxide. Residue serine 139 is modified to Phosphoserine. The tract at residues 150-160 (HLRKMRKRLMR) is LDL and other lipoprotein receptors binding. 154–157 (MRKR) is a binding site for heparin. The tract at residues 202-282 (TANLGAGAAQ…GWFEPIVEDM (81 aa)) is lipid-binding and lipoprotein association. Residue 221–228 (GDRIRGRL) coordinates heparin. The tract at residues 258-312 (QQIRLQAEIFQARLKGWFEPIVEDMHRQWANLMEKIQASVATNPIISTPMPQENQ) is homooligomerization. The tract at residues 270-282 (RLKGWFEPIVEDM) is specificity for association with VLDL.

This sequence belongs to the apolipoprotein A1/A4/E family. In terms of assembly, homotetramer. May interact with ABCA1; functionally associated with ABCA1 in the biogenesis of HDLs. May interact with APP/A4 amyloid-beta peptide; the interaction is extremely stable in vitro but its physiological significance is unclear. May interact with MAPT. May interact with MAP2. In the cerebrospinal fluid, interacts with secreted SORL1. Interacts with PMEL; this allows the loading of PMEL luminal fragment on ILVs to induce fibril nucleation. APOE exists as multiple glycosylated and sialylated glycoforms within cells and in plasma. The extent of glycosylation and sialylation are tissue and context specific. In terms of processing, glycated in plasma VLDL. Post-translationally, phosphorylated by FAM20C in the extracellular medium.

Its subcellular location is the secreted. The protein localises to the extracellular space. The protein resides in the extracellular matrix. It is found in the extracellular vesicle. It localises to the endosome. Its subcellular location is the multivesicular body. Functionally, APOE is an apolipoprotein, a protein associating with lipid particles, that mainly functions in lipoprotein-mediated lipid transport between organs via the plasma and interstitial fluids. APOE is a core component of plasma lipoproteins and is involved in their production, conversion and clearance. Apolipoproteins are amphipathic molecules that interact both with lipids of the lipoprotein particle core and the aqueous environment of the plasma. As such, APOE associates with chylomicrons, chylomicron remnants, very low density lipoproteins (VLDL) and intermediate density lipoproteins (IDL) but shows a preferential binding to high-density lipoproteins (HDL). It also binds a wide range of cellular receptors including the LDL receptor/LDLR, the LDL receptor-related proteins LRP1, LRP2 and LRP8 and the very low-density lipoprotein receptor/VLDLR that mediate the cellular uptake of the APOE-containing lipoprotein particles. Finally, APOE also has a heparin-binding activity and binds heparan-sulfate proteoglycans on the surface of cells, a property that supports the capture and the receptor-mediated uptake of APOE-containing lipoproteins by cells. A main function of APOE is to mediate lipoprotein clearance through the uptake of chylomicrons, VLDLs, and HDLs by hepatocytes. APOE is also involved in the biosynthesis by the liver of VLDLs as well as their uptake by peripheral tissues ensuring the delivery of triglycerides and energy storage in muscle, heart and adipose tissues. By participating in the lipoprotein-mediated distribution of lipids among tissues, APOE plays a critical role in plasma and tissues lipid homeostasis. APOE is also involved in two steps of reverse cholesterol transport, the HDLs-mediated transport of cholesterol from peripheral tissues to the liver, and thereby plays an important role in cholesterol homeostasis. First, it is functionally associated with ABCA1 in the biogenesis of HDLs in tissues. Second, it is enriched in circulating HDLs and mediates their uptake by hepatocytes. APOE also plays an important role in lipid transport in the central nervous system, regulating neuron survival and sprouting. This Mus pahari (Gairdner's shrew-mouse) protein is Apolipoprotein E (Apoe).